The chain runs to 84 residues: Small ribosomal subunit protein bS16 (84 aa).

Belongs to the bacterial ribosomal protein bS16 family.

The chain is Small ribosomal subunit protein bS16 from Koribacter versatilis (strain Ellin345).